We begin with the raw amino-acid sequence, 354 residues long: D-alanine--D-alanine ligase (354 aa).

One can recognise an ATP-grasp domain in the interval 154 to 348 (RSWFLTNNIN…FTNLIEEIIK (195 aa)). An ATP-binding site is contributed by 181-232 (MKRPYVIKPITQGSSIGIEVIFEEDDFNFANYDFPYGDQVIIEKYIKGRELQ). Mg(2+) contacts are provided by Glu-301, Glu-315, and Asn-317.

This sequence belongs to the D-alanine--D-alanine ligase family. Mg(2+) serves as cofactor. Mn(2+) is required as a cofactor.

It is found in the cytoplasm. The enzyme catalyses 2 D-alanine + ATP = D-alanyl-D-alanine + ADP + phosphate + H(+). It participates in cell wall biogenesis; peptidoglycan biosynthesis. Functionally, cell wall formation. The protein is D-alanine--D-alanine ligase of Rickettsia canadensis (strain McKiel).